A 496-amino-acid polypeptide reads, in one-letter code: Aspartyl/glutamyl-tRNA(Asn/Gln) amidotransferase subunit B (496 aa).

This sequence belongs to the GatB/GatE family. GatB subfamily. Heterotrimer of A, B and C subunits.

The catalysed reaction is L-glutamyl-tRNA(Gln) + L-glutamine + ATP + H2O = L-glutaminyl-tRNA(Gln) + L-glutamate + ADP + phosphate + H(+). The enzyme catalyses L-aspartyl-tRNA(Asn) + L-glutamine + ATP + H2O = L-asparaginyl-tRNA(Asn) + L-glutamate + ADP + phosphate + 2 H(+). Allows the formation of correctly charged Asn-tRNA(Asn) or Gln-tRNA(Gln) through the transamidation of misacylated Asp-tRNA(Asn) or Glu-tRNA(Gln) in organisms which lack either or both of asparaginyl-tRNA or glutaminyl-tRNA synthetases. The reaction takes place in the presence of glutamine and ATP through an activated phospho-Asp-tRNA(Asn) or phospho-Glu-tRNA(Gln). The sequence is that of Aspartyl/glutamyl-tRNA(Asn/Gln) amidotransferase subunit B from Prochlorococcus marinus (strain MIT 9303).